We begin with the raw amino-acid sequence, 87 residues long: DNA-directed RNA polymerase subunit Rpo5 (87 aa).

It belongs to the archaeal Rpo5/eukaryotic RPB5 RNA polymerase subunit family. As to quaternary structure, part of the RNA polymerase complex.

The protein resides in the cytoplasm. It catalyses the reaction RNA(n) + a ribonucleoside 5'-triphosphate = RNA(n+1) + diphosphate. Its function is as follows. DNA-dependent RNA polymerase (RNAP) catalyzes the transcription of DNA into RNA using the four ribonucleoside triphosphates as substrates. This is DNA-directed RNA polymerase subunit Rpo5 from Thermoplasma volcanium (strain ATCC 51530 / DSM 4299 / JCM 9571 / NBRC 15438 / GSS1).